Reading from the N-terminus, the 257-residue chain is Beta-fibrinogenase mucrofibrase-3 (257 aa).

The first 18 residues, 1–18 (MVLIRVLANLLILQLSYA), serve as a signal peptide directing secretion. Residues 19–24 (QKSSEL) constitute a propeptide that is removed on maturation. The Peptidase S1 domain maps to 25-248 (VIGGDECNIN…HLDWIKGIIA (224 aa)). Cystine bridges form between cysteine 31–cysteine 162, cysteine 49–cysteine 65, cysteine 97–cysteine 255, cysteine 141–cysteine 209, cysteine 173–cysteine 188, and cysteine 199–cysteine 224. Residues histidine 64 and aspartate 109 each act as charge relay system in the active site. Serine 203 acts as the Charge relay system in catalysis.

The protein belongs to the peptidase S1 family. Snake venom subfamily. As to quaternary structure, monomer. In terms of tissue distribution, expressed by the venom gland.

Its subcellular location is the secreted. Functionally, snake venom serine protease with fibrinogenolytic activities. Cleaves beta-chain of fibrinogen (FGB) efficiently and shows relatively lower activity on alpha-chain. The sequence is that of Beta-fibrinogenase mucrofibrase-3 from Protobothrops mucrosquamatus (Taiwan habu).